Consider the following 364-residue polypeptide: UDP-N-acetylglucosamine--N-acetylmuramyl-(pentapeptide) pyrophosphoryl-undecaprenol N-acetylglucosamine transferase (364 aa).

Residues 15–17, N123, R164, S191, and Q286 contribute to the UDP-N-acetyl-alpha-D-glucosamine site; that span reads TGG.

Belongs to the glycosyltransferase 28 family. MurG subfamily.

The protein resides in the cell inner membrane. It catalyses the reaction di-trans,octa-cis-undecaprenyl diphospho-N-acetyl-alpha-D-muramoyl-L-alanyl-D-glutamyl-meso-2,6-diaminopimeloyl-D-alanyl-D-alanine + UDP-N-acetyl-alpha-D-glucosamine = di-trans,octa-cis-undecaprenyl diphospho-[N-acetyl-alpha-D-glucosaminyl-(1-&gt;4)]-N-acetyl-alpha-D-muramoyl-L-alanyl-D-glutamyl-meso-2,6-diaminopimeloyl-D-alanyl-D-alanine + UDP + H(+). It functions in the pathway cell wall biogenesis; peptidoglycan biosynthesis. Cell wall formation. Catalyzes the transfer of a GlcNAc subunit on undecaprenyl-pyrophosphoryl-MurNAc-pentapeptide (lipid intermediate I) to form undecaprenyl-pyrophosphoryl-MurNAc-(pentapeptide)GlcNAc (lipid intermediate II). The sequence is that of UDP-N-acetylglucosamine--N-acetylmuramyl-(pentapeptide) pyrophosphoryl-undecaprenol N-acetylglucosamine transferase from Prochlorococcus marinus (strain MIT 9515).